Reading from the N-terminus, the 277-residue chain is Undecaprenyl-diphosphatase (277 aa).

A run of 7 helical transmembrane segments spans residues 3–23 (IVLL…EFLP), 43–63 (VGKV…ILVY), 85–105 (LNVL…GKAI), 109–129 (LFTP…ILWA), 189–209 (TDFS…YSLF), 218–238 (ADLP…WLCI), and 249–269 (SFVG…ATAW).

It belongs to the UppP family.

Its subcellular location is the cell inner membrane. It carries out the reaction di-trans,octa-cis-undecaprenyl diphosphate + H2O = di-trans,octa-cis-undecaprenyl phosphate + phosphate + H(+). Its function is as follows. Catalyzes the dephosphorylation of undecaprenyl diphosphate (UPP). Confers resistance to bacitracin. The polypeptide is Undecaprenyl-diphosphatase (Albidiferax ferrireducens (strain ATCC BAA-621 / DSM 15236 / T118) (Rhodoferax ferrireducens)).